The following is a 928-amino-acid chain: DNA ligase 4 (928 aa).

Glu-302, Lys-304, Arg-309, Glu-362, Phe-409, Glu-469, Lys-474, Lys-492, and Lys-494 together coordinate ATP. Lys-304 functions as the N6-AMP-lysine intermediate in the catalytic mechanism. Glu-362 serves as a coordination point for Mg(2+). Residue Glu-469 participates in Mg(2+) binding. BRCT domains follow at residues 673–769 (VESD…PYFI) and 821–927 (PWIY…DYKF).

The protein belongs to the ATP-dependent DNA ligase family. It depends on Mg(2+) as a cofactor.

The protein resides in the nucleus. The catalysed reaction is ATP + (deoxyribonucleotide)n-3'-hydroxyl + 5'-phospho-(deoxyribonucleotide)m = (deoxyribonucleotide)n+m + AMP + diphosphate.. Its function is as follows. DNA ligase involved in DNA non-homologous end joining (NHEJ); required for double-strand break (DSB) repair. Not required for the repair of DSBs induced by ionizing radiation or UV light. Has an important role in morphogenesis, positively affecting the capacity to form hyphae. The chain is DNA ligase 4 (LIG4) from Candida albicans (strain SC5314 / ATCC MYA-2876) (Yeast).